We begin with the raw amino-acid sequence, 380 residues long: Queuine tRNA-ribosyltransferase (380 aa).

Aspartate 96 serves as the catalytic Proton acceptor. Residues 96 to 100, aspartate 150, glutamine 193, and glycine 220 contribute to the substrate site; that span reads DSGGF. The interval 251–257 is RNA binding; the sequence is GVGAPDS. Aspartate 270 (nucleophile) is an active-site residue. The tract at residues 275–279 is RNA binding; important for wobble base 34 recognition; sequence TRIAR. Zn(2+) is bound by residues cysteine 308, cysteine 310, cysteine 313, and histidine 339.

It belongs to the queuine tRNA-ribosyltransferase family. Homodimer. Within each dimer, one monomer is responsible for RNA recognition and catalysis, while the other monomer binds to the replacement base PreQ1. Requires Zn(2+) as cofactor.

The enzyme catalyses 7-aminomethyl-7-carbaguanine + guanosine(34) in tRNA = 7-aminomethyl-7-carbaguanosine(34) in tRNA + guanine. It participates in tRNA modification; tRNA-queuosine biosynthesis. Functionally, catalyzes the base-exchange of a guanine (G) residue with the queuine precursor 7-aminomethyl-7-deazaguanine (PreQ1) at position 34 (anticodon wobble position) in tRNAs with GU(N) anticodons (tRNA-Asp, -Asn, -His and -Tyr). Catalysis occurs through a double-displacement mechanism. The nucleophile active site attacks the C1' of nucleotide 34 to detach the guanine base from the RNA, forming a covalent enzyme-RNA intermediate. The proton acceptor active site deprotonates the incoming PreQ1, allowing a nucleophilic attack on the C1' of the ribose to form the product. After dissociation, two additional enzymatic reactions on the tRNA convert PreQ1 to queuine (Q), resulting in the hypermodified nucleoside queuosine (7-(((4,5-cis-dihydroxy-2-cyclopenten-1-yl)amino)methyl)-7-deazaguanosine). The polypeptide is Queuine tRNA-ribosyltransferase (Streptococcus uberis (strain ATCC BAA-854 / 0140J)).